Reading from the N-terminus, the 455-residue chain is tRNA modification GTPase MnmE (455 aa).

(6S)-5-formyl-5,6,7,8-tetrahydrofolate contacts are provided by arginine 26, glutamate 86, and arginine 125. Positions glycine 222–phenylalanine 376 constitute a TrmE-type G domain. Asparagine 232 is a binding site for K(+). GTP is bound by residues asparagine 232–serine 237, threonine 251–threonine 257, and aspartate 276–glycine 279. Mg(2+) is bound at residue serine 236. K(+) contacts are provided by threonine 251, isoleucine 253, and threonine 256. Threonine 257 provides a ligand contact to Mg(2+). Lysine 455 contributes to the (6S)-5-formyl-5,6,7,8-tetrahydrofolate binding site.

The protein belongs to the TRAFAC class TrmE-Era-EngA-EngB-Septin-like GTPase superfamily. TrmE GTPase family. As to quaternary structure, homodimer. Heterotetramer of two MnmE and two MnmG subunits. Requires K(+) as cofactor.

It is found in the cytoplasm. Its function is as follows. Exhibits a very high intrinsic GTPase hydrolysis rate. Involved in the addition of a carboxymethylaminomethyl (cmnm) group at the wobble position (U34) of certain tRNAs, forming tRNA-cmnm(5)s(2)U34. The chain is tRNA modification GTPase MnmE from Lactococcus lactis subsp. cremoris (strain MG1363).